Consider the following 38-residue polypeptide: Potassium channel toxin alpha-KTx 3.2 (38 aa).

3 cysteine pairs are disulfide-bonded: Cys8–Cys28, Cys14–Cys33, and Cys18–Cys35.

Belongs to the short scorpion toxin superfamily. Potassium channel inhibitor family. Alpha-KTx 03 subfamily. Expressed by the venom gland.

Its subcellular location is the secreted. Potent inhibitor of the Shaker potassium channels and its mammalian homologs (Kv1.1/KCNA1, Kv1.3/KCNA3, Kv1.6/KCNA6) (Ki&lt;1 nM for all channels). Also blocks Kv1.2/KCNA2 (IC(50)=26.8 nM). It also shows a weak interaction with nicotinic acetylcholine receptors (nAChR), suggesting it may weakly inhibit it. In Leiurus hebraeus (Hebrew deathstalker scorpion), this protein is Potassium channel toxin alpha-KTx 3.2.